Reading from the N-terminus, the 481-residue chain is ATP synthase subunit beta (481 aa).

160–167 (GGAGVGKT) serves as a coordination point for ATP.

This sequence belongs to the ATPase alpha/beta chains family. As to quaternary structure, F-type ATPases have 2 components, CF(1) - the catalytic core - and CF(0) - the membrane proton channel. CF(1) has five subunits: alpha(3), beta(3), gamma(1), delta(1), epsilon(1). CF(0) has three main subunits: a(1), b(2) and c(9-12). The alpha and beta chains form an alternating ring which encloses part of the gamma chain. CF(1) is attached to CF(0) by a central stalk formed by the gamma and epsilon chains, while a peripheral stalk is formed by the delta and b chains.

It localises to the cell inner membrane. It catalyses the reaction ATP + H2O + 4 H(+)(in) = ADP + phosphate + 5 H(+)(out). In terms of biological role, produces ATP from ADP in the presence of a proton gradient across the membrane. The catalytic sites are hosted primarily by the beta subunits. This Myxococcus xanthus (strain DK1622) protein is ATP synthase subunit beta.